Reading from the N-terminus, the 338-residue chain is D-erythrose-4-phosphate dehydrogenase (338 aa).

11 to 12 (RI) contacts NAD(+). Residues 153 to 155 (SCT), Arg199, 212 to 213 (TK), and Arg235 each bind substrate. Cys154 (nucleophile) is an active-site residue. Asn317 serves as a coordination point for NAD(+).

Belongs to the glyceraldehyde-3-phosphate dehydrogenase family. Epd subfamily. Homotetramer.

The protein localises to the cytoplasm. It catalyses the reaction D-erythrose 4-phosphate + NAD(+) + H2O = 4-phospho-D-erythronate + NADH + 2 H(+). The protein operates within cofactor biosynthesis; pyridoxine 5'-phosphate biosynthesis; pyridoxine 5'-phosphate from D-erythrose 4-phosphate: step 1/5. Catalyzes the NAD-dependent conversion of D-erythrose 4-phosphate to 4-phosphoerythronate. The polypeptide is D-erythrose-4-phosphate dehydrogenase (Shewanella piezotolerans (strain WP3 / JCM 13877)).